The sequence spans 284 residues: Bifunctional protein FolD (284 aa).

Residues 165-167, Ser-190, and Val-231 each bind NADP(+); that span reads GRS.

This sequence belongs to the tetrahydrofolate dehydrogenase/cyclohydrolase family. In terms of assembly, homodimer.

It catalyses the reaction (6R)-5,10-methylene-5,6,7,8-tetrahydrofolate + NADP(+) = (6R)-5,10-methenyltetrahydrofolate + NADPH. The enzyme catalyses (6R)-5,10-methenyltetrahydrofolate + H2O = (6R)-10-formyltetrahydrofolate + H(+). It functions in the pathway one-carbon metabolism; tetrahydrofolate interconversion. Its function is as follows. Catalyzes the oxidation of 5,10-methylenetetrahydrofolate to 5,10-methenyltetrahydrofolate and then the hydrolysis of 5,10-methenyltetrahydrofolate to 10-formyltetrahydrofolate. The polypeptide is Bifunctional protein FolD (Brevibacillus brevis (strain 47 / JCM 6285 / NBRC 100599)).